A 250-amino-acid chain; its full sequence is Phosphonates import ATP-binding protein PhnC (250 aa).

Positions 2–247 (IVFNNVNKVW…KLDAQAMKKI (246 aa)) constitute an ABC transporter domain. ATP is bound at residue 35 to 42 (GLSGAGKT).

Belongs to the ABC transporter superfamily. Phosphonates importer (TC 3.A.1.9.1) family. As to quaternary structure, the complex is composed of two ATP-binding proteins (PhnC), two transmembrane proteins (PhnE) and a solute-binding protein (PhnD).

Its subcellular location is the cell membrane. It carries out the reaction phosphonate(out) + ATP + H2O = phosphonate(in) + ADP + phosphate + H(+). Functionally, part of the ABC transporter complex PhnCDE involved in phosphonates import. Responsible for energy coupling to the transport system. This chain is Phosphonates import ATP-binding protein PhnC, found in Mycoplasma mycoides subsp. mycoides SC (strain CCUG 32753 / NCTC 10114 / PG1).